The sequence spans 419 residues: Cytosine permease (419 aa).

The Cytoplasmic segment spans residues 1 to 19; it reads MSQDNNFSQGPVPQSARKG. Residues 20-39 traverse the membrane as a helical segment; sequence VLALTFVMLGLTFFSASMWT. The Periplasmic portion of the chain corresponds to 40–51; it reads GGTLGTGLSYHD. Residues 52–71 traverse the membrane as a helical segment; the sequence is FFLAVLIGNLLLGIYTSFLG. Residues 72–100 are Cytoplasmic-facing; it reads YIGAKTGLTTHLLARFSFGVKGSWLPSLL. The helical transmembrane segment at 101–120 threads the bilayer; it reads LGGTQVGWFGVGVAMFAIPV. Residues 121–127 lie on the Periplasmic side of the membrane; it reads GKATGLD. Residues 128–147 traverse the membrane as a helical segment; sequence INLLIAVSGLLMTVTVFFGI. The Cytoplasmic segment spans residues 148–152; the sequence is SALTV. The helical transmembrane segment at 153 to 172 threads the bilayer; sequence LSLIAVPAIACLGGYSVWLA. The Periplasmic portion of the chain corresponds to 173–192; sequence VNGMGGLDALKAVVPAQPLD. The chain crosses the membrane as a helical span at residues 193 to 212; it reads FNVALALVVGSFISAGTLTA. Topologically, residues 213–221 are cytoplasmic; it reads DFVRFGRNA. The chain crosses the membrane as a helical span at residues 222–242; sequence KLAVLVAMVAFFLGNSLMFIF. Over 243–257 the chain is Periplasmic; the sequence is GAAGAAALGMADISD. A helical membrane pass occupies residues 258–277; sequence VMIAQGLLLPAIVVLGLNIW. At 278–300 the chain is on the cytoplasmic side; the sequence is TTNDNALYASGLGFANITGMSSK. The helical transmembrane segment at 301-320 threads the bilayer; it reads TLSVINGIIGTVCALWLYNN. Position 321 (F321) is a topological domain, periplasmic. The chain crosses the membrane as a helical span at residues 322–341; sequence VGWLTFLSAAIPPVGGVIIA. Topologically, residues 342–358 are cytoplasmic; it reads DYLMNRRRYEHFATTRM. The helical transmembrane segment at 359–378 threads the bilayer; the sequence is MSVNWVAILAVALGIAAGHW. Over 379-380 the chain is Periplasmic; sequence LP. Residues 381 to 400 form a helical membrane-spanning segment; it reads GIVPVNAVLGGALSYLILNP. The Cytoplasmic portion of the chain corresponds to 401–419; sequence ILNRKTTAAMTHVEANSVE.

Belongs to the purine-cytosine permease (2.A.39) family.

The protein resides in the cell inner membrane. Required for cytosine transport into the cell. This is Cytosine permease (codB) from Escherichia coli O157:H7.